Consider the following 416-residue polypeptide: 3-oxoacyl-[acyl-carrier-protein] synthase 1 (416 aa).

The Ketosynthase family 3 (KS3) domain occupies 11-415; the sequence is FPSVVVTAVT…GHNVALAFGR (405 aa). Catalysis depends on for beta-ketoacyl synthase activity residues C171, H311, and H345. Substrate-binding residues include H311 and H345.

This sequence belongs to the thiolase-like superfamily. Beta-ketoacyl-ACP synthases family.

It is found in the cytoplasm. It catalyses the reaction an ultra-long-chain mono-unsaturated fatty acyl-[ACP] + malonyl-[ACP] + H(+) = a 3-oxo-ultra-long-chain mono-unsaturated fatty acyl-[ACP] + holo-[ACP] + CO2. It participates in lipid metabolism; mycolic acid biosynthesis. Its function is as follows. Part of the mycobacterial fatty acid elongation system FAS-II, which is involved in mycolic acid biosynthesis. Catalyzes the elongation of long chain acyl-ACP substrates by the addition of two carbons from malonyl-ACP to an acyl acceptor. Involved in the initial extension of the mycolate chain and forms monounsaturated fatty acids that averaged 40 carbons in length. This chain is 3-oxoacyl-[acyl-carrier-protein] synthase 1 (kasA), found in Mycobacterium tuberculosis (strain ATCC 35801 / TMC 107 / Erdman).